The primary structure comprises 375 residues: MSKRDYYEVLGVNRDAGDDEIKKAYRKLAMKYHPDRNPDSKEAEEKFKEAKEAYEVLSDAQKKGAYDRYGHAGVDPSMGGGGGGQGFEGFADAFGDIFGDLFGGRGGGGGRSNVYRGADLRYNLEISLEEAARGAEKTIRIPTVEECGTCHGSGAKPGTQPKTCPTCGGAGQVRIQQGFFSIQQTCPKCHGTGRIIPDPCGDCGGAGRVKKQKTLEVKIPAGIDEGMRLRHSGHGEPGVNGGPPGDLYVEIHIRQHPVFERDHDDLHCEMPISFATAALGGEIEIPTLEGMARIKIPAETQSGKVFRLRGKGIKNVRSHTHGDLMCHVVVETPVNLTERQKELLREFEEVSKGDAERHNPKAKSWMDKVRDFFAT.

One can recognise a J domain in the interval 5 to 70 (DYYEVLGVNR…QKKGAYDRYG (66 aa)). The CR-type zinc-finger motif lies at 134–212 (GAEKTIRIPT…CGGAGRVKKQ (79 aa)). Residues C147, C150, C164, C167, C186, C189, C200, and C203 each contribute to the Zn(2+) site. 4 CXXCXGXG motif repeats span residues 147-154 (CGTCHGSG), 164-171 (CPTCGGAG), 186-193 (CPKCHGTG), and 200-207 (CGDCGGAG).

Belongs to the DnaJ family. In terms of assembly, homodimer. The cofactor is Zn(2+).

It localises to the cytoplasm. Participates actively in the response to hyperosmotic and heat shock by preventing the aggregation of stress-denatured proteins and by disaggregating proteins, also in an autonomous, DnaK-independent fashion. Unfolded proteins bind initially to DnaJ; upon interaction with the DnaJ-bound protein, DnaK hydrolyzes its bound ATP, resulting in the formation of a stable complex. GrpE releases ADP from DnaK; ATP binding to DnaK triggers the release of the substrate protein, thus completing the reaction cycle. Several rounds of ATP-dependent interactions between DnaJ, DnaK and GrpE are required for fully efficient folding. Also involved, together with DnaK and GrpE, in the DNA replication of plasmids through activation of initiation proteins. This chain is Chaperone protein DnaJ, found in Azoarcus sp. (strain BH72).